The primary structure comprises 418 residues: Tyrosine--tRNA ligase (418 aa).

An L-tyrosine-binding site is contributed by Tyr34. The 'HIGH' region motif lies at 39–48; it reads PTADSLHLGH. Residues Tyr169 and Gln173 each contribute to the L-tyrosine site. The 'KMSKS' region signature appears at 229-233; it reads KFGKS. An ATP-binding site is contributed by Lys232. Residues 352–418 form the S4 RNA-binding domain; that stretch reads LNIVEILVSS…GKKKYAVLTY (67 aa).

Belongs to the class-I aminoacyl-tRNA synthetase family. TyrS type 1 subfamily. In terms of assembly, homodimer.

The protein resides in the cytoplasm. It catalyses the reaction tRNA(Tyr) + L-tyrosine + ATP = L-tyrosyl-tRNA(Tyr) + AMP + diphosphate + H(+). Its function is as follows. Catalyzes the attachment of tyrosine to tRNA(Tyr) in a two-step reaction: tyrosine is first activated by ATP to form Tyr-AMP and then transferred to the acceptor end of tRNA(Tyr). This chain is Tyrosine--tRNA ligase, found in Streptococcus uberis (strain ATCC BAA-854 / 0140J).